We begin with the raw amino-acid sequence, 244 residues long: uncharacterized protein (244 aa).

The segment at 30–49 (RETNESPKSQNPSEEATTVN) is disordered. Over residues 35–49 (SPKSQNPSEEATTVN) the composition is skewed to polar residues. 4 helical membrane passes run 96–116 (LWGT…LSNS), 128–148 (LLFI…FGLF), 171–191 (GFFI…TIAF), and 194–214 (FVTI…HPLS). Residues 224–244 (QLDGSGERKTDSSLVHQNPPN) form a disordered region. Polar residues predominate over residues 235–244 (SSLVHQNPPN).

Its subcellular location is the nucleus membrane. This is an uncharacterized protein from Schizosaccharomyces pombe (strain 972 / ATCC 24843) (Fission yeast).